A 394-amino-acid polypeptide reads, in one-letter code: Elongation factor Tu (394 aa).

The region spanning lysine 10–isoleucine 204 is the tr-type G domain. Residues glycine 19 to threonine 26 are G1. Residue glycine 19–threonine 26 participates in GTP binding. Threonine 26 provides a ligand contact to Mg(2+). Residues glycine 60 to serine 64 are G2. Residues aspartate 81–glycine 84 form a G3 region. GTP contacts are provided by residues aspartate 81–histidine 85 and asparagine 136–aspartate 139. The interval asparagine 136–aspartate 139 is G4. Positions serine 174 to leucine 176 are G5.

The protein belongs to the TRAFAC class translation factor GTPase superfamily. Classic translation factor GTPase family. EF-Tu/EF-1A subfamily. In terms of assembly, monomer.

It localises to the cytoplasm. The enzyme catalyses GTP + H2O = GDP + phosphate + H(+). In terms of biological role, GTP hydrolase that promotes the GTP-dependent binding of aminoacyl-tRNA to the A-site of ribosomes during protein biosynthesis. The chain is Elongation factor Tu from Rickettsia typhi (strain ATCC VR-144 / Wilmington).